A 506-amino-acid chain; its full sequence is Maturase K (506 aa).

It belongs to the intron maturase 2 family. MatK subfamily.

Its subcellular location is the plastid. It localises to the chloroplast. Functionally, usually encoded in the trnK tRNA gene intron. Probably assists in splicing its own and other chloroplast group II introns. The sequence is that of Maturase K from Rhododendron ferrugineum (Alpenrose).